The chain runs to 480 residues: Sensor histidine kinase CusS (480 aa).

At 1–15 the chain is on the cytoplasmic side; that stretch reads MVSKPFQRPFSLATR. The chain crosses the membrane as a helical span at residues 16–36; sequence LTFFISLATIAAFFAFAWIMI. Residues 37–186 lie on the Periplasmic side of the membrane; that stretch reads HSVKVHFAEQ…LHYINDLMNK (150 aa). Residues 187 to 207 form a helical membrane-spanning segment; that stretch reads LIMTASVISILIVFIVLLAVH. Residues 208 to 260 enclose the HAMP domain; that stretch reads KGHAPIRSVSRQIQNITSKDLDVRLDPQTVPIELEQLVLSFNHMIERIEDVFT. The Cytoplasmic segment spans residues 208–480; the sequence is KGHAPIRSVS…GTRFVITLPA (273 aa). The 213-residue stretch at 268-480 folds into the Histidine kinase domain; it reads DIAHEIRTPI…GTRFVITLPA (213 aa). Residue His-271 is modified to Phosphohistidine; by autocatalysis.

In terms of processing, autophosphorylated.

It localises to the cell inner membrane. It carries out the reaction ATP + protein L-histidine = ADP + protein N-phospho-L-histidine.. Functionally, member of the two-component regulatory system CusS/CusR involved in response to copper and silver. Acts as a copper/silver ion sensor. Activates CusR by phosphorylation. In Escherichia coli (strain K12), this protein is Sensor histidine kinase CusS (cusS).